A 247-amino-acid chain; its full sequence is Cell division protein ZapD (247 aa).

This sequence belongs to the ZapD family. In terms of assembly, interacts with FtsZ.

Its subcellular location is the cytoplasm. Its function is as follows. Cell division factor that enhances FtsZ-ring assembly. Directly interacts with FtsZ and promotes bundling of FtsZ protofilaments, with a reduction in FtsZ GTPase activity. The sequence is that of Cell division protein ZapD from Escherichia coli O157:H7.